A 188-amino-acid chain; its full sequence is Peptidyl-tRNA hydrolase (188 aa).

Tyr-14 is a tRNA binding site. Residue His-19 is the Proton acceptor of the active site. 3 residues coordinate tRNA: Tyr-64, Asn-66, and Asn-112.

The protein belongs to the PTH family. As to quaternary structure, monomer.

The protein resides in the cytoplasm. The enzyme catalyses an N-acyl-L-alpha-aminoacyl-tRNA + H2O = an N-acyl-L-amino acid + a tRNA + H(+). Its function is as follows. Hydrolyzes ribosome-free peptidyl-tRNAs (with 1 or more amino acids incorporated), which drop off the ribosome during protein synthesis, or as a result of ribosome stalling. In terms of biological role, catalyzes the release of premature peptidyl moieties from peptidyl-tRNA molecules trapped in stalled 50S ribosomal subunits, and thus maintains levels of free tRNAs and 50S ribosomes. This Leuconostoc mesenteroides subsp. mesenteroides (strain ATCC 8293 / DSM 20343 / BCRC 11652 / CCM 1803 / JCM 6124 / NCDO 523 / NBRC 100496 / NCIMB 8023 / NCTC 12954 / NRRL B-1118 / 37Y) protein is Peptidyl-tRNA hydrolase.